A 1398-amino-acid polypeptide reads, in one-letter code: DNA-directed RNA polymerase subunit beta' (1398 aa).

Zn(2+) contacts are provided by cysteine 73, cysteine 75, cysteine 88, and cysteine 91. Mg(2+) is bound by residues aspartate 464, aspartate 466, and aspartate 468. Residues cysteine 823, cysteine 897, cysteine 904, and cysteine 907 each coordinate Zn(2+).

Belongs to the RNA polymerase beta' chain family. The RNAP catalytic core consists of 2 alpha, 1 beta, 1 beta' and 1 omega subunit. When a sigma factor is associated with the core the holoenzyme is formed, which can initiate transcription. Mg(2+) serves as cofactor. The cofactor is Zn(2+).

It catalyses the reaction RNA(n) + a ribonucleoside 5'-triphosphate = RNA(n+1) + diphosphate. Functionally, DNA-dependent RNA polymerase catalyzes the transcription of DNA into RNA using the four ribonucleoside triphosphates as substrates. This is DNA-directed RNA polymerase subunit beta' from Gluconacetobacter diazotrophicus (strain ATCC 49037 / DSM 5601 / CCUG 37298 / CIP 103539 / LMG 7603 / PAl5).